Here is a 58-residue protein sequence, read N- to C-terminus: Cyclotide trypsin inhibitor TopI1 (58 aa).

The signal sequence occupies residues 1-23; that stretch reads MKFIIVLLLLTALTLTSIPVIEG. A cross-link (cyclopeptide (Ile-Lys)) is located at residues 24-55; it reads ILKRCKTYDDCKDVCKARKGKCEFGICKCMIK. 3 disulfide bridges follow: Cys28/Cys45, Cys34/Cys50, and Cys38/Cys52. Residue Ser56 is modified to Serine amide.

Post-translationally, this is a cyclic peptide. In terms of tissue distribution, expressed by the venom gland.

It is found in the secreted. Functionally, first cyclic scorpion trypsin inhibitor (Kd~0.5 nM). Does not inhibit chymotrypsin. The protein is Cyclotide trypsin inhibitor TopI1 of Tityus obscurus (Amazonian scorpion).